Consider the following 229-residue polypeptide: Deleted in azoospermia-like (229 aa).

The RRM domain maps to 47 to 128 (NTLFVGGIDM…PAIMKERSSR (82 aa)). One can recognise a DAZ domain in the interval 172 to 198 (PYSYSSPPGIMVPQVPMNYAQTTYAYQ).

It belongs to the RRM DAZ family. As to expression, testis and ovary specific. In ovary, it is localized in the cortex of oocytes. At the onset of embryogenesis, maternal product is located at the vegetal pole, before migrating toward blastomeres through cytoplasmic streams as early embryogenesis proceededs.

It localises to the cytoplasm. Functionally, RNA-binding protein involved in gametogenesis in both males and females. Acts by binding to the 3'-UTR of mRNA, specifically recognizing GUU triplets, and promoting the translation of key transcripts. Establishes oocyte polarity through interaction with Bucky ball (BUC). Interacts with Bucky ball (BUC) mRNA to mediate Balbiani body formation and oocyte polarity during early oogenesis. In Danio rerio (Zebrafish), this protein is Deleted in azoospermia-like (dazl).